The primary structure comprises 252 residues: ATP synthase subunit a (252 aa).

A run of 6 helical transmembrane segments spans residues 29–49 (FTNV…FLFI), 87–107 (FFPL…IGLF), 117–137 (IMIT…YGFY), 146–166 (LFVP…IEVI), 196–216 (FIVS…LPLI), and 219–239 (VAIT…FTVL).

It belongs to the ATPase A chain family. As to quaternary structure, F-type ATPases have 2 components, CF(1) - the catalytic core - and CF(0) - the membrane proton channel. CF(1) has five subunits: alpha(3), beta(3), gamma(1), delta(1), epsilon(1). CF(0) has three main subunits: a(1), b(2) and c(9-12). The alpha and beta chains form an alternating ring which encloses part of the gamma chain. CF(1) is attached to CF(0) by a central stalk formed by the gamma and epsilon chains, while a peripheral stalk is formed by the delta and b chains.

The protein localises to the cell inner membrane. Key component of the proton channel; it plays a direct role in the translocation of protons across the membrane. The chain is ATP synthase subunit a from Bartonella henselae (strain ATCC 49882 / DSM 28221 / CCUG 30454 / Houston 1) (Rochalimaea henselae).